A 95-amino-acid chain; its full sequence is ESAT-6-like protein EsxC (95 aa).

It belongs to the WXG100 family. ESAT-6 subfamily.

Its subcellular location is the secreted. The polypeptide is ESAT-6-like protein EsxC (Mycolicibacterium paratuberculosis (strain ATCC BAA-968 / K-10) (Mycobacterium paratuberculosis)).